Here is a 357-residue protein sequence, read N- to C-terminus: Probable cinnamyl alcohol dehydrogenase 2 (357 aa).

Zn(2+) is bound at residue cysteine 47. Serine 49 provides a ligand contact to NADP(+). Zn(2+)-binding residues include histidine 69, glutamate 70, cysteine 100, cysteine 103, cysteine 106, cysteine 114, and cysteine 163. Residues threonine 167, 188–193, 211–216, threonine 251, glycine 275, and 298–300 each bind NADP(+); these read GLGGVG, SSSNKK, and SFI.

This sequence belongs to the zinc-containing alcohol dehydrogenase family. In terms of assembly, homodimer. It depends on Zn(2+) as a cofactor. In terms of processing, the N-terminus is blocked.

The enzyme catalyses (E)-cinnamyl alcohol + NADP(+) = (E)-cinnamaldehyde + NADPH + H(+). It carries out the reaction (E)-coniferol + NADP(+) = (E)-coniferaldehyde + NADPH + H(+). The catalysed reaction is (E)-sinapyl alcohol + NADP(+) = (E)-sinapaldehyde + NADPH + H(+). It catalyses the reaction (E)-4-coumaroyl alcohol + NADP(+) = (E)-4-coumaraldehyde + NADPH + H(+). The enzyme catalyses (E)-caffeyl alcohol + NADP(+) = (E)-caffeyl aldehyde + NADPH + H(+). It functions in the pathway aromatic compound metabolism; phenylpropanoid biosynthesis. Its function is as follows. Involved in lignin biosynthesis. Catalyzes the final step specific for the production of lignin monomers. Catalyzes the NADPH-dependent reduction of coniferaldehyde, 5-hydroxyconiferaldehyde, sinapaldehyde, 4-coumaraldehyde and caffeyl aldehyde to their respective alcohols. The sequence is that of Probable cinnamyl alcohol dehydrogenase 2 (CAD19) from Nicotiana tabacum (Common tobacco).